Reading from the N-terminus, the 130-residue chain is Holo-[acyl-carrier-protein] synthase (130 aa).

2 residues coordinate Mg(2+): Asp9 and Glu58.

It belongs to the P-Pant transferase superfamily. AcpS family. The cofactor is Mg(2+).

It localises to the cytoplasm. It carries out the reaction apo-[ACP] + CoA = holo-[ACP] + adenosine 3',5'-bisphosphate + H(+). Its function is as follows. Transfers the 4'-phosphopantetheine moiety from coenzyme A to a Ser of acyl-carrier-protein. The sequence is that of Holo-[acyl-carrier-protein] synthase from Mycolicibacterium paratuberculosis (strain ATCC BAA-968 / K-10) (Mycobacterium paratuberculosis).